Here is a 528-residue protein sequence, read N- to C-terminus: Phosphoenolpyruvate carboxykinase (ATP) (528 aa).

Substrate-binding residues include R56, Y192, and K198. ATP is bound by residues K198, H217, and G233–T241. The Mn(2+) site is built by K198 and H217. D254 is a binding site for Mn(2+). 3 residues coordinate ATP: E282, R319, and T444. R319 contributes to the substrate binding site.

The protein belongs to the phosphoenolpyruvate carboxykinase (ATP) family. The cofactor is Mn(2+).

It localises to the cytoplasm. It catalyses the reaction oxaloacetate + ATP = phosphoenolpyruvate + ADP + CO2. The protein operates within carbohydrate biosynthesis; gluconeogenesis. Its function is as follows. Involved in the gluconeogenesis. Catalyzes the conversion of oxaloacetate (OAA) to phosphoenolpyruvate (PEP) through direct phosphoryl transfer between the nucleoside triphosphate and OAA. The chain is Phosphoenolpyruvate carboxykinase (ATP) from Bacillus cereus (strain B4264).